A 699-amino-acid chain; its full sequence is Macoilin-2 (699 aa).

Helical transmembrane passes span 28–48 (TFLYLKFLVVWALVLLADFVL), 75–95 (AFSVFFVCVAFTSDIICLLFI), 120–140 (VCLPTVSLWILFVYIEAAIRF), and 154–174 (FAAHCIGYPVVTLGFGFKSYV). 4 disordered regions span residues 219–289 (AAAA…SILP), 322–411 (LLKD…PNNQ), 432–451 (LQASRQTEQDLRSQLGSLGT), and 679–699 (FMDTSPSGLDPNASVYQPLKK). N-linked (GlcNAc...) asparagine glycosylation is found at Asn-241, Asn-267, Asn-345, and Asn-365. Residues 257–271 (LEYREKERGKNESKK) are compositionally biased toward basic and acidic residues. A compositionally biased stretch (low complexity) spans 329 to 346 (SSSSSSTSSNSNKNYKNA). A compositionally biased stretch (low complexity) spans 366-382 (GSVPSSSGPSSSASSSS). Asn-690 is a glycosylation site (N-linked (GlcNAc...) asparagine).

It belongs to the macoilin family.

It localises to the nucleus membrane. It is found in the cell projection. The protein resides in the axon. The protein localises to the rough endoplasmic reticulum membrane. May play a role in the regulation of neuronal activity. In Danio rerio (Zebrafish), this protein is Macoilin-2.